Here is a 129-residue protein sequence, read N- to C-terminus: Omega-scoloptoxin(05)-Ssm1a (129 aa).

A signal peptide spans 1-24 (MPSLCIIALFGTLTFYTLIPSIHT). The propeptide occupies 25 to 46 (LKCVRCDGPMSNYDCKTTYPAA).

Belongs to the scoloptoxin-05 family. In terms of processing, contains 3 disulfide bonds. As to expression, expressed by the venom gland.

It is found in the secreted. Functionally, toxin that increase voltage-gated calcium channel (Cav) currents in DRG neurons by 70% and 120%, when 1 uM and 10 uM are tested, respectively. The polypeptide is Omega-scoloptoxin(05)-Ssm1a (Scolopendra mutilans (Chinese red-headed centipede)).